The chain runs to 248 residues: Peptidyl-prolyl cis-trans isomerase, chloroplastic (248 aa).

Residues 85 to 243 (FFDIEIGGES…KPCKIAKSGE (159 aa)) form the PPIase cyclophilin-type domain. The segment at 223–248 (QETSKLDNSPKKPCKIAKSGELPLDG) is disordered.

The protein belongs to the cyclophilin-type PPIase family. Highly expressed in leaf.

It is found in the plastid. The protein localises to the chloroplast stroma. The catalysed reaction is [protein]-peptidylproline (omega=180) = [protein]-peptidylproline (omega=0). Binds cyclosporin A (CsA). CsA mediates some of its effects via an inhibitory action on PPIase. Its function is as follows. PPIases accelerate the folding of proteins. It catalyzes the cis-trans isomerization of proline imidic peptide bonds in oligopeptides. This chain is Peptidyl-prolyl cis-trans isomerase, chloroplastic, found in Vicia faba (Broad bean).